The chain runs to 192 residues: dTDP-3-amino-3,6-dideoxy-alpha-D-galactopyranose 3-N-acetyltransferase (192 aa).

It belongs to the transferase hexapeptide repeat family.

The catalysed reaction is dTDP-3-amino-3,6-dideoxy-alpha-D-galactopyranose + acetyl-CoA = dTDP-3-acetamido-3,6-dideoxy-alpha-D-galactopyranose + CoA + H(+). Its function is as follows. Catalyzes the transfer of an acetyl group to dTDP-D-Fucp3N to form dTDP-D-Fucp3NAc in the biosynthesis of dTDP-3-acetamido-3,6-dideoxy-alpha-D-galactose, a glycan chain of the S-layer. The sequence is that of dTDP-3-amino-3,6-dideoxy-alpha-D-galactopyranose 3-N-acetyltransferase (fdtC) from Aneurinibacillus thermoaerophilus.